A 148-amino-acid polypeptide reads, in one-letter code: UPF0178 protein lpl0088 (148 aa).

The protein belongs to the UPF0178 family.

The sequence is that of UPF0178 protein lpl0088 from Legionella pneumophila (strain Lens).